Here is a 276-residue protein sequence, read N- to C-terminus: Reaction center protein L chain (276 aa).

3 helical membrane-spanning segments follow: residues 33–56 (GFFGVTTLLFTVLGTALIVWGAAL), 85–113 (GLWQIITFSAIGAFVSWALREVEICRKLG), and 116–141 (YHIPFAFGFAILAYVSLVVIRPVMMG). Positions 154 and 174 each coordinate (7R,8Z)-bacteriochlorophyll b. The helical transmembrane segment at 171–200 (NPAHMLGITLFFTTCLALALHGSLILSAAN) threads the bilayer. His191 is a binding site for Fe cation. Residue Phe217 coordinates a ubiquinone. The chain crosses the membrane as a helical span at residues 226–252 (GTLGIHRVGLILALSAVVWSIICMILS). His231 provides a ligand contact to Fe cation.

Belongs to the reaction center PufL/M/PsbA/D family. Reaction center is composed of four bacteriochlorophylls, two bacteriopheophytins, two ubiquinones, one iron, and three highly hydrophobic polypeptide chains (designated L, M, and H).

It localises to the cellular chromatophore membrane. Functionally, the reaction center is a membrane-bound complex that mediates the initial photochemical event in the electron transfer process of photosynthesis. The sequence is that of Reaction center protein L chain (pufL) from Rhodospirillum rubrum.